A 1095-amino-acid polypeptide reads, in one-letter code: Inactive phospholipase C-like protein 1 (1095 aa).

The span at 1 to 11 shows a compositional bias: basic and acidic residues; that stretch reads MAEGAAGREDP. The interval 1–61 is disordered; it reads MAEGAAGRED…PGAAGTPADS (61 aa). 2 positions are modified to phosphoserine: serine 47 and serine 77. The interval 83–222 is interaction with PPP1C; that stretch reads SNQKCGGRKK…IWVSGLRYLV (140 aa). Phosphothreonine; by PKA is present on threonine 93. At serine 95 the chain carries Phosphoserine. In terms of domain architecture, PH spans 113 to 223; it reads SFMQAGCELK…WVSGLRYLVS (111 aa). In terms of domain architecture, PI-PLC X-box spans 398–542; sequence QDMTQPLSHY…LKRMIIVKGK (145 aa). An interaction with GABA A beta subunit region spans residues 543 to 567; it reads KLPSDPDVLEGEVTDEDEEAEMSRR. A Phosphothreonine modification is found at threonine 556. Phosphoserine is present on serine 569. Positions 585 to 701 constitute a PI-PLC Y-box domain; the sequence is LSDLVSICKS…GYVLRPSIMR (117 aa). One can recognise a C2 domain in the interval 701-830; the sequence is RDEVSYFSAN…PGYRHVPLRS (130 aa). Coiled coils occupy residues 894 to 914 and 1034 to 1059; these read LREA…IKEL and LKGQ…QLAC. Residues 1066-1095 are disordered; that stretch reads KAPSSSAEAKSKRSLEAIEEKESSEENGKL. Residues 1074–1095 show a composition bias toward basic and acidic residues; that stretch reads AKSKRSLEAIEEKESSEENGKL. Serine 1079 carries the phosphoserine modification.

In terms of assembly, interacts with PPP2CA. Interacts with Ins(1,4,5)P3, Ins(1,4,5,6)P4, GABARAP, GABA receptor beta subunits, GABA receptor gamma-2 subunits and PPP1C. May form a ternary complex with GABA receptor beta subunit and GABARAP. The formation of a ternary complex with GABA receptor beta subunit and GABARAP could be the key step for facilitating the association of GABARAP with the GABA receptor gamma-2 subunit and to allow it to be transported at the right destination. In terms of processing, phosphorylated by the catalytic subunit of PKA. Phosphorylation of Thr-93 resulted in dissociation of PPP1C from PRIP1. Expressed in a variety of fetal and adult organs including brain, lung and kidney. Its expression was greatly reduced in small and non-small cell lung carcinoma. Isoform 1 is predominantly expressed in brain.

It localises to the cytoplasm. In terms of biological role, involved in an inositol phospholipid-based intracellular signaling cascade. Shows no PLC activity to phosphatidylinositol 4,5-bisphosphate and phosphatidylinositol. Component in the phospho-dependent endocytosis process of GABA A receptor. Regulates the turnover of receptors and thus contributes to the maintenance of GABA-mediated synaptic inhibition. Its aberrant expression could contribute to the genesis and progression of lung carcinoma. Acts as an inhibitor of PPP1C. The chain is Inactive phospholipase C-like protein 1 (PLCL1) from Homo sapiens (Human).